The primary structure comprises 962 residues: Glycine dehydrogenase (decarboxylating) (962 aa).

Residue lysine 709 is modified to N6-(pyridoxal phosphate)lysine.

It belongs to the GcvP family. The glycine cleavage system is composed of four proteins: P, T, L and H. Pyridoxal 5'-phosphate is required as a cofactor.

It carries out the reaction N(6)-[(R)-lipoyl]-L-lysyl-[glycine-cleavage complex H protein] + glycine + H(+) = N(6)-[(R)-S(8)-aminomethyldihydrolipoyl]-L-lysyl-[glycine-cleavage complex H protein] + CO2. The glycine cleavage system catalyzes the degradation of glycine. The P protein binds the alpha-amino group of glycine through its pyridoxal phosphate cofactor; CO(2) is released and the remaining methylamine moiety is then transferred to the lipoamide cofactor of the H protein. The sequence is that of Glycine dehydrogenase (decarboxylating) from Shewanella putrefaciens (strain CN-32 / ATCC BAA-453).